The following is a 527-amino-acid chain: GRSVVEFGDMVCKRQQSAVSSAGSEKPSGKEENVHSPEDKRVTKSKEKSKHLRTRTGRKVKSDVTDRFRKKEQSSESSEGEKKQGRQRTGTRGKKSTDLKEEKVKREREYESSSDGTEKLPEGEEIGLFSKGVKQNKNDTTDEAKKGKKWKDKSCEKKEELSDSVDRLPVKGESCDSSEDKKTRNRVSLREKKQFSLPAKSSGKRPECSSSDTERSVKGECCDSTDKRVKRIDLRERRSSNSKRSTKEVKSGSSSSDAEGSSEDAKKQKKQRMSAKKKNSNTKERKRKSLRATTTKRKQADITSSSSDIGDDDQNSAGEESSDEQKIKPVTENLVLPSHTGFCQSSGDEAFSKSVPATVDDDDDDNDPENRIAKKMLLEEIKANLSSDEDGSSDDEPKEGEKKRIGKQSEETPGDDGSNQVNSESDSDSEESKKPRYRHRLLRHKLSLSDGESGGEKKTKPKEHKETKGRNRRKVSSEDSEDTDFQESGVSEEVSESEDEQRPRTRSAKKAELEENQRSYKQKKKRR.

The segment at 1–527 (GRSVVEFGDM…RSYKQKKKRR (527 aa)) is disordered. Residues 14–23 (RQQSAVSSAG) are compositionally biased toward polar residues. Positions 27–46 (PSGKEENVHSPEDKRVTKSK) are enriched in basic and acidic residues. The span at 47–59 (EKSKHLRTRTGRK) shows a compositional bias: basic residues. Over residues 60-84 (VKSDVTDRFRKKEQSSESSEGEKKQ) the composition is skewed to basic and acidic residues. Phosphoserine is present on residues S62 and S74. A compositionally biased stretch (basic residues) spans 85 to 94 (GRQRTGTRGK). Composition is skewed to basic and acidic residues over residues 95–122 (KSTDLKEEKVKREREYESSSDGTEKLPE), 136–145 (NKNDTTDEAK), 152–194 (DKSC…EKKQ), and 204–250 (KRPE…KEVK). K105 is covalently cross-linked (Glycyl lysine isopeptide (Lys-Gly) (interchain with G-Cter in SUMO2)). S112, S113, and S114 each carry phosphoserine. Residue S162 is modified to Phosphoserine. The residue at position 184 (R184) is a Citrulline. A compositionally biased stretch (basic residues) spans 267-297 (KQKKQRMSAKKKNSNTKERKRKSLRATTTKR). Positions 290 to 427 (LRATTTKRKQ…SNQVNSESDS (138 aa)) are interaction with DAXX. Residues S345, S346, and S354 each carry the phosphoserine modification. Residues 368-382 (PENRIAKKMLLEEIK) show a composition bias toward basic and acidic residues. A compositionally biased stretch (acidic residues) spans 387–398 (SDEDGSSDDEPK). The span at 399 to 410 (EGEKKRIGKQSE) shows a compositional bias: basic and acidic residues. Residues S423, S425, and S427 each carry the phosphoserine modification. The span at 435-446 (PRYRHRLLRHKL) shows a compositional bias: basic residues. Phosphoserine is present on residues S449 and S453. Composition is skewed to basic and acidic residues over residues 454–469 (GGEKKTKPKEHKETKG) and 509–518 (KKAELEENQR).

This sequence belongs to the SNF2/RAD54 helicase family. As to quaternary structure, interacts with DAXX to form the chromatin remodeling complex ATRX:DAXX. Probably binds EZH2. Binds annexin V in a calcium and phosphatidylcholine/phosphatidylserine-dependent manner. Interacts directly with CBX5 via the PxVxL motif. Interacts with RAD50, MRE11 and NBN; indicative for an association with the MRN complex. Interacts with histone MACROH2A1. Interacts with histone H3 peptides methylated at 'Lys-10' with preferences H3K9me3 &gt; H3K9me2 &gt; H3K9me1. Interacts with histone H3 peptides unmethylated at 'Lys-5' (H3K4me0). Interacts with MECP2, SMC1 and SMC3. Interacts with SETDB1, TRIM28 and ZNF274. Post-translationally, citrullinated by PADI4.

Its subcellular location is the nucleus. The protein localises to the chromosome. It localises to the telomere. It is found in the PML body. It carries out the reaction ATP + H2O = ADP + phosphate + H(+). In terms of biological role, involved in transcriptional regulation and chromatin remodeling. Facilitates DNA replication in multiple cellular environments and is required for efficient replication of a subset of genomic loci. Binds to DNA tandem repeat sequences in both telomeres and euchromatin and in vitro binds DNA quadruplex structures. May help stabilizing G-rich regions into regular chromatin structures by remodeling G4 DNA and incorporating H3.3-containing nucleosomes. Catalytic component of the chromatin remodeling complex ATRX:DAXX which has ATP-dependent DNA translocase activity and catalyzes the replication-independent deposition of histone H3.3 in pericentric DNA repeats outside S-phase and telomeres, and the in vitro remodeling of H3.3-containing nucleosomes. Its heterochromatin targeting is proposed to involve a combinatorial readout of histone H3 modifications (specifically methylation states of H3K9 and H3K4) and association with CBX5. Involved in maintaining telomere structural integrity in embryonic stem cells probably implying recruitment of CBX5 to telomeres. May be involved in transcriptional regulation of telomeric repeat-containing RNA (TERRA). Acts as a negative regulator of chromatin incorporation of transcriptionally repressive histone MACROH2A1, particularily at telomeres. Participates in the allele-specific gene expression at the imprinted IGF2/H19 gene locus. On the maternal allele, required for the chromatin occupancy of SMC1 and CTCTF within the H19 imprinting control region (ICR) and involved in esatblishment of histone tails modifications in the ICR. Binds to zinc-finger coding genes with atypical chromatin signatures and regulates its H3K9me3 levels. Forms a complex with ZNF274, TRIM28 and SETDB1 to facilitate the deposition and maintenance of H3K9me3 at the 3' exons of zinc-finger genes. The chain is Transcriptional regulator ATRX (Atrx) from Rattus norvegicus (Rat).